The sequence spans 278 residues: 3-methyl-2-oxobutanoate hydroxymethyltransferase (278 aa).

Positions 43 and 82 each coordinate Mg(2+). Residues D43–S44, D82, and K112 contribute to the 3-methyl-2-oxobutanoate site. E114 serves as a coordination point for Mg(2+). The active-site Proton acceptor is E181.

Belongs to the PanB family. Homodecamer; pentamer of dimers. Mg(2+) serves as cofactor.

It localises to the cytoplasm. It catalyses the reaction 3-methyl-2-oxobutanoate + (6R)-5,10-methylene-5,6,7,8-tetrahydrofolate + H2O = 2-dehydropantoate + (6S)-5,6,7,8-tetrahydrofolate. It participates in cofactor biosynthesis; (R)-pantothenate biosynthesis; (R)-pantoate from 3-methyl-2-oxobutanoate: step 1/2. Functionally, catalyzes the reversible reaction in which hydroxymethyl group from 5,10-methylenetetrahydrofolate is transferred onto alpha-ketoisovalerate to form ketopantoate. The protein is 3-methyl-2-oxobutanoate hydroxymethyltransferase of Bacillus cereus (strain G9842).